The primary structure comprises 253 residues: CD151 antigen (253 aa).

Topologically, residues 1–18 (MGEFNEKKATCGTVCLKY) are cytoplasmic. 2 S-palmitoyl cysteine lipidation sites follow: cysteine 11 and cysteine 15. The chain crosses the membrane as a helical span at residues 19–39 (LLFTYNCCFWLAGLAVMAVGI). At 40 to 57 (WTLALKSDYISLLASSTY) the chain is on the extracellular side. A helical membrane pass occupies residues 58–78 (LATAYILVVAGVVVMVTGVLG). Residues 79–91 (CCATFKERRNLLR) are Cytoplasmic-facing. The chain crosses the membrane as a helical span at residues 92–112 (LYFILLLIIFLLEIIAGILAY). Residues 113 to 221 (VYYQQLNTEL…LESFIQEHLR (109 aa)) are Extracellular-facing. N-linked (GlcNAc...) asparagine glycosylation is present at asparagine 159. A helical transmembrane segment spans residues 222-242 (VIGAVGIGIACVQVFGMIFTC). S-palmitoyl cysteine attachment occurs at residues cysteine 242 and cysteine 243. The Cytoplasmic segment spans residues 243–253 (CLYRSLKLEHY).

The protein belongs to the tetraspanin (TM4SF) family. In terms of assembly, interacts with integrins ITGA3:ITGB1, ITGA5:ITGB1, ITGA3:ITGB1 and ITGA6:ITGB4 and with CD9 and CD181. Interacts (via the second extracellular domain) with integrin ITGAV:ITGB3. Interacts with ITGA3; this interaction modulates ITGA3 glycosylation pattern. Interacts with F11R. Interacts with RAC1 and CDC42; these interactions mediate physical association of RAC1 and CDC42 with integrin adhesion receptor complexes. Palmitoylated. Palmitoylation by ZDHHC2 regulates CD151 expression, association with other tetraspanin family proteins and function in cell adhesion. Post-translationally, ubiquitinated by RNF128 on lysine residues present in the tetraspanin amino terminus via 'Lys-48'-linked ubiquitin leading to proteasomal degradation.

It localises to the cell membrane. Functionally, structural component of specialized membrane microdomains known as tetraspanin-enriched microdomains (TERMs), which act as platforms for receptor clustering and signaling. Plays a role in various cellular and molecular mechanism through its association with both integrin and non-integrin proteins. These interactions facilitate critical cellular functions, including cell-to-cell communication, wound healing, platelet aggregation, trafficking, cell motility, and angiogenesis. Via interaction with JAM-A/F11R and integrin ITGA3:ITGB1, promotes the recruitment of signaling molecules such as RAC1, CDC42 and RhoGTPases to facilitate the polarization of epithelial cells and the reorganization of the actin cytoskeleton, which are critical steps in cell migration process. Regulates the glycosylation pattern of ITGA3:ITGB1 thereby modulating its activity. Plays an essential role in the maintenance of central laminin-binding integrin ITGA6:ITGB4-containing adhesion complexes. Essential for the proper assembly of the glomerular and tubular basement membranes in kidney. Contributes to T-cell activation by modulating integrin signaling leading to activation of downstream targets PTK2 and MAPK1/MAPK3. The sequence is that of CD151 antigen (Cd151) from Rattus norvegicus (Rat).